A 205-amino-acid polypeptide reads, in one-letter code: Dephospho-CoA kinase (205 aa).

In terms of domain architecture, DPCK spans 15–205 (VIGLTGGIAT…VERALDQASI (191 aa)). Residue 23-28 (ATGKST) participates in ATP binding.

It belongs to the CoaE family.

The protein resides in the cytoplasm. It carries out the reaction 3'-dephospho-CoA + ATP = ADP + CoA + H(+). It participates in cofactor biosynthesis; coenzyme A biosynthesis; CoA from (R)-pantothenate: step 5/5. Functionally, catalyzes the phosphorylation of the 3'-hydroxyl group of dephosphocoenzyme A to form coenzyme A. This is Dephospho-CoA kinase from Gloeobacter violaceus (strain ATCC 29082 / PCC 7421).